The following is a 382-amino-acid chain: uncharacterized protein (382 aa).

12 helical membrane passes run 8–28 (VLLLLCGLLLFTISIAVLNTL), 41–61 (WQVGMVSSSYFSGNLVGTLIA), 73–93 (SYHYSCILFALATCGLMLSVD), 94–114 (FWSWLGWRFFAGVACALIWVI), 133–153 (AAYMMVYYLGTVTGQLLLGVV), 157–177 (LLSVIPWVSALVITAMLPLLF), 208–228 (GCIISGVLLGSLYGLLPLYLS), 235–255 (ASVGWWMALLVSSGIIGQWPI), 274–294 (VVILGSIAILGNYALAPALFI), 295–315 (LGCAGFTLYPVAMAWACEKVS), 325–345 (ALLMSYTIGSLTGPTMTSLLM), and 349–369 (SDNLLFIMIAGVALVYLMMLL).

It belongs to the major facilitator superfamily. YcaD (TC 2.A.1.26) family.

It is found in the cell inner membrane. This is an uncharacterized protein from Yersinia enterocolitica serotype O:8 / biotype 1B (strain NCTC 13174 / 8081).